Reading from the N-terminus, the 61-residue chain is Small ribosomal subunit protein uS14 (61 aa).

The Zn(2+) site is built by Cys24, Cys27, Cys40, and Cys43.

This sequence belongs to the universal ribosomal protein uS14 family. Zinc-binding uS14 subfamily. Part of the 30S ribosomal subunit. Contacts proteins S3 and S10. The cofactor is Zn(2+).

Functionally, binds 16S rRNA, required for the assembly of 30S particles and may also be responsible for determining the conformation of the 16S rRNA at the A site. This is Small ribosomal subunit protein uS14 from Macrococcus caseolyticus (strain JCSC5402) (Macrococcoides caseolyticum).